Reading from the N-terminus, the 752-residue chain is Pre-mRNA-processing factor 39 (752 aa).

The segment at 1–148 (MEDSGESMTG…DPAAPQEPEL (148 aa)) is disordered. The segment covering 28–42 (TTGTDDVTGLSTSDL) has biased composition (polar residues). Low complexity-rich tracts occupy residues 43 to 56 (TTEQPPESQEQTQP), 76 to 94 (QSASPAEPAAENSEQPPES), and 133 to 148 (EPAAEADPAAPQEPEL). HAT repeat units lie at residues 180 to 212 (NHLLGSRKAFDAFFLHYPYCYGYWKKYADIERK), 214 to 246 (GYIQMADEVYRRGLQAIPLSVDLWLHYITFLRE), and 254 to 289 (EAESRIRASYEHAVLACGTDFRSDRLWEAYIAWETE). The disordered stretch occupies residues 347–374 (NKPSGDEDAETEAPGEELPPGTEDLPDP). Over residues 352-361 (DEDAETEAPG) the composition is skewed to acidic residues. 2 HAT repeats span residues 408-440 (AFEEGIKRPYFHVKALEKTQLNNWREYLDFELE) and 442-474 (GTPERVVVLFERCLIACALYEEFWIKYAKYLES). Residues 678-699 (SFKRKAENGSEEPDAKRQRTDD) show a composition bias toward basic and acidic residues. The disordered stretch occupies residues 678-703 (SFKRKAENGSEEPDAKRQRTDDQSVA). One copy of the HAT 6 repeat lies at 700–731 (QSVASGQMMDMQANHAGYNYNNWYQYNSWGSQ).

Belongs to the PRP39 family.

The protein localises to the nucleus. Functionally, involved in pre-mRNA splicing. The protein is Pre-mRNA-processing factor 39 (prpf39) of Danio rerio (Zebrafish).